Here is a 252-residue protein sequence, read N- to C-terminus: MILHAQAKHGKPGLPWLVFLHGFSGDCHEWQEVGEAFADYSRLYVDLPGHGGSAAISVDGFDDVTDLLRKTLVSYNILDFWLVGYSLGGRVAMMAACQGLAGLCGVIVEGGHPGLQNAEQRAERQRSDRQWAQRFCTEPLTAVFADWYQQPVFASLNDDQRRELVALRSNNNGATLAAMLEATSLAVQPDLRANLSARTFAFYYLCGERDSKFRALAAELAADCHVIPRAGHNAHRENPAGVIASLAQILRF.

Belongs to the AB hydrolase superfamily. MenH family. In terms of assembly, monomer.

It catalyses the reaction 5-enolpyruvoyl-6-hydroxy-2-succinyl-cyclohex-3-ene-1-carboxylate = (1R,6R)-6-hydroxy-2-succinyl-cyclohexa-2,4-diene-1-carboxylate + pyruvate. It functions in the pathway quinol/quinone metabolism; 1,4-dihydroxy-2-naphthoate biosynthesis; 1,4-dihydroxy-2-naphthoate from chorismate: step 3/7. Its pathway is quinol/quinone metabolism; menaquinone biosynthesis. In terms of biological role, catalyzes a proton abstraction reaction that results in 2,5-elimination of pyruvate from 2-succinyl-5-enolpyruvyl-6-hydroxy-3-cyclohexene-1-carboxylate (SEPHCHC) and the formation of 2-succinyl-6-hydroxy-2,4-cyclohexadiene-1-carboxylate (SHCHC). This chain is 2-succinyl-6-hydroxy-2,4-cyclohexadiene-1-carboxylate synthase, found in Escherichia coli (strain SE11).